A 269-amino-acid chain; its full sequence is Putative 12-oxophytodienoate reductase-like protein 2A (269 aa).

FMN-binding positions include 28–30 (PLT) and Gln103. 175 to 178 (HGAH) lines the substrate pocket. Tyr180 acts as the Proton donor in catalysis. Arg227 is an FMN binding site.

It belongs to the NADH:flavin oxidoreductase/NADH oxidase family. Requires FMN as cofactor.

Putative oxophytodienoate reductase that may be involved in the biosynthesis or metabolism of oxylipin signaling molecules. The chain is Putative 12-oxophytodienoate reductase-like protein 2A from Arabidopsis thaliana (Mouse-ear cress).